A 520-amino-acid polypeptide reads, in one-letter code: Eukaryotic translation initiation factor 3 subunit L (520 aa).

The region spanning 278–478 (FATYYYVGIC…ELDIALENDL (201 aa)) is the PCI domain.

It belongs to the eIF-3 subunit L family. In terms of assembly, component of the eukaryotic translation initiation factor 3 (eIF-3) complex.

The protein localises to the cytoplasm. Its function is as follows. Component of the eukaryotic translation initiation factor 3 (eIF-3) complex, which is involved in protein synthesis of a specialized repertoire of mRNAs and, together with other initiation factors, stimulates binding of mRNA and methionyl-tRNAi to the 40S ribosome. The eIF-3 complex specifically targets and initiates translation of a subset of mRNAs involved in cell proliferation. The chain is Eukaryotic translation initiation factor 3 subunit L from Yarrowia lipolytica (strain CLIB 122 / E 150) (Yeast).